The chain runs to 142 residues: Transcriptional regulator MraZ (142 aa).

SpoVT-AbrB domains lie at 5–47 and 76–119; these read EFTH…PLNE and ATDC…SAER.

It belongs to the MraZ family. As to quaternary structure, forms oligomers.

The protein resides in the cytoplasm. Its subcellular location is the nucleoid. The protein is Transcriptional regulator MraZ of Limosilactobacillus reuteri (strain DSM 20016) (Lactobacillus reuteri).